A 308-amino-acid chain; its full sequence is Bifunctional protein FolD (308 aa).

Residues 171-173, S198, and I239 contribute to the NADP(+) site; that span reads GRS.

Belongs to the tetrahydrofolate dehydrogenase/cyclohydrolase family. As to quaternary structure, homodimer.

It carries out the reaction (6R)-5,10-methylene-5,6,7,8-tetrahydrofolate + NADP(+) = (6R)-5,10-methenyltetrahydrofolate + NADPH. The catalysed reaction is (6R)-5,10-methenyltetrahydrofolate + H2O = (6R)-10-formyltetrahydrofolate + H(+). It functions in the pathway one-carbon metabolism; tetrahydrofolate interconversion. In terms of biological role, catalyzes the oxidation of 5,10-methylenetetrahydrofolate to 5,10-methenyltetrahydrofolate and then the hydrolysis of 5,10-methenyltetrahydrofolate to 10-formyltetrahydrofolate. This Borreliella burgdorferi (strain ATCC 35210 / DSM 4680 / CIP 102532 / B31) (Borrelia burgdorferi) protein is Bifunctional protein FolD.